The chain runs to 303 residues: DCN1-like protein 3 (303 aa).

The segment at 1–40 (MGQCVTKCKNPSSTLGSKNGERESSKPHKRSSSHKEEHMS) is disordered. G2 carries N-myristoyl glycine lipidation. The region spanning 85–277 (SSLQRIEELF…LFDTFVEWEM (193 aa)) is the DCUN1 domain.

As to quaternary structure, may interact (via the DCUN1 domain) with unneddylated cullins.

The protein resides in the cell membrane. It localises to the cytoplasm. It is found in the nucleus. Its subcellular location is the perinuclear region. Contributes to the neddylation of all cullins by transferring NEDD8 from N-terminally acetylated NEDD8-conjugating E2s enzyme to different cullin C-terminal domain-RBX complexes. At the cell membrane, can promote and as well inhibit cullins neddylation. The polypeptide is DCN1-like protein 3 (Xenopus laevis (African clawed frog)).